The sequence spans 249 residues: Undecaprenyl-diphosphatase (249 aa).

Transmembrane regions (helical) follow at residues 11 to 31, 35 to 55, 80 to 100, 101 to 121, 135 to 155, 180 to 200, 202 to 222, and 226 to 246; these read GLTEFLPISSSGHLAIFTAIF, PDVGYFAFLHLATFLAVLIFV, LVLSTIPAVIVGLCFGDFIES, VFSSTFLIGVFLSITGILMLL, IPYLDALIVGIFQAFSVLPGI, FLMSLPVTFGAGILELQKVAF, TEQIFGFFISFLTGLLGLYLV, and VIGGKLKIFGYYCVLASFFVL.

Belongs to the UppP family.

Its subcellular location is the cell membrane. It carries out the reaction di-trans,octa-cis-undecaprenyl diphosphate + H2O = di-trans,octa-cis-undecaprenyl phosphate + phosphate + H(+). Functionally, catalyzes the dephosphorylation of undecaprenyl diphosphate (UPP). The protein is Undecaprenyl-diphosphatase of Methanococcus maripaludis (strain C6 / ATCC BAA-1332).